The primary structure comprises 407 residues: Indoleamine 2,3-dioxygenase 1 (407 aa).

H350 contributes to the heme b binding site. Residues 362–407 (SKKKPTDGDKSEEPSNVESRGTGGTNPMTFLRSVKDTTEKALLSWP) form a disordered region. Positions 365 to 374 (KPTDGDKSEE) are enriched in basic and acidic residues.

Belongs to the indoleamine 2,3-dioxygenase family. Monomer. The cofactor is heme b. Highly expressed in epididymis, duodemum, jejunum, ileum, colon and spleen. Highly expressed in epididymis, prostate, duodemum, jejunum, ileum, colon and spleen, not detected in the liver (at protein level). Expressed in tumors only upon exposure to IFN gamma. Constitutively expressed in placenta in trophoblast cells. Expression is restricted to perinuclear regions of primary trophoblast giant cells (TGCs) of fetal origin at mid-gestation (10.5 dpc). After placentation (14 dpc), no IDO expression was detected at the maternal-fetal interface.

Its subcellular location is the cytoplasm. The protein resides in the cytosol. The catalysed reaction is D-tryptophan + O2 = N-formyl-D-kynurenine. It carries out the reaction L-tryptophan + O2 = N-formyl-L-kynurenine. Its activity is regulated as follows. Activity is inhibited by and MTH-trp (methylthiohydantoin-DL-tryptophan), modestly inhibited by L-1MT (1-methyl-L-tryptophan) but not D-1MT (1-methyl-D-tryptophan). Catalyzes the first and rate limiting step of the catabolism of the essential amino acid tryptophan along the kynurenine pathway. Involved in the peripheral immune tolerance, contributing to maintain homeostasis by preventing autoimmunity or immunopathology that would result from uncontrolled and overreacting immune responses. Tryptophan shortage inhibits T lymphocytes division and accumulation of tryptophan catabolites induces T-cell apoptosis and differentiation of regulatory T-cells. Acts as a suppressor of anti-tumor immunity. Limits the growth of intracellular pathogens by depriving tryptophan. Protects the fetus from maternal immune rejection. The sequence is that of Indoleamine 2,3-dioxygenase 1 from Mus musculus (Mouse).